Reading from the N-terminus, the 371-residue chain is Dual-specificity RNA methyltransferase RlmN (371 aa).

The active-site Proton acceptor is glutamate 97. The 239-residue stretch at 103–341 folds into the Radical SAM core domain; that stretch reads DGDRATLCVS…VTVRTTRGDD (239 aa). A disulfide bond links cysteine 110 and cysteine 346. Residues cysteine 117, cysteine 121, and cysteine 124 each contribute to the [4Fe-4S] cluster site. S-adenosyl-L-methionine contacts are provided by residues 171–172, serine 203, 225–227, and asparagine 303; these read GE and SLH. Cysteine 346 (S-methylcysteine intermediate) is an active-site residue.

It belongs to the radical SAM superfamily. RlmN family. [4Fe-4S] cluster is required as a cofactor.

It is found in the cytoplasm. It carries out the reaction adenosine(2503) in 23S rRNA + 2 reduced [2Fe-2S]-[ferredoxin] + 2 S-adenosyl-L-methionine = 2-methyladenosine(2503) in 23S rRNA + 5'-deoxyadenosine + L-methionine + 2 oxidized [2Fe-2S]-[ferredoxin] + S-adenosyl-L-homocysteine. The catalysed reaction is adenosine(37) in tRNA + 2 reduced [2Fe-2S]-[ferredoxin] + 2 S-adenosyl-L-methionine = 2-methyladenosine(37) in tRNA + 5'-deoxyadenosine + L-methionine + 2 oxidized [2Fe-2S]-[ferredoxin] + S-adenosyl-L-homocysteine. Its function is as follows. Specifically methylates position 2 of adenine 2503 in 23S rRNA and position 2 of adenine 37 in tRNAs. m2A2503 modification seems to play a crucial role in the proofreading step occurring at the peptidyl transferase center and thus would serve to optimize ribosomal fidelity. This chain is Dual-specificity RNA methyltransferase RlmN, found in Marinomonas sp. (strain MWYL1).